A 434-amino-acid polypeptide reads, in one-letter code: Glutamate-1-semialdehyde 2,1-aminomutase (434 aa).

K274 bears the N6-(pyridoxal phosphate)lysine mark.

It belongs to the class-III pyridoxal-phosphate-dependent aminotransferase family. HemL subfamily. Homodimer. It depends on pyridoxal 5'-phosphate as a cofactor.

It is found in the cytoplasm. The enzyme catalyses (S)-4-amino-5-oxopentanoate = 5-aminolevulinate. It participates in porphyrin-containing compound metabolism; protoporphyrin-IX biosynthesis; 5-aminolevulinate from L-glutamyl-tRNA(Glu): step 2/2. The protein is Glutamate-1-semialdehyde 2,1-aminomutase of Acidovorax sp. (strain JS42).